Reading from the N-terminus, the 282-residue chain is Secretory carrier-associated membrane protein 3 (282 aa).

The interval 1-36 (MAGKHGRNGFEDDDVNPFAGGSVPPANNSRLPPLSH) is disordered. At 1 to 117 (MAGKHGRNGF…EIPIHLQRMQ (117 aa)) the chain is on the cytoplasmic side. Positions 48–92 (LDSSKDLKKKEKELQAMEAELNKRERELKRKEEAAAQAGIVIEDK) form a coiled coil. 4 helical membrane passes run 118–138 (YLAF…IIAT), 148–168 (VIIW…AYVL), 185–205 (FGWF…AAVA), and 230–250 (IVGI…LLSI). The Cytoplasmic portion of the chain corresponds to 251–282 (GVIQQVYMYFRGSGKAAEMKREAARGALSSAF).

This sequence belongs to the SCAMP family.

The protein resides in the cell membrane. Its subcellular location is the cytoplasmic vesicle. It is found in the secretory vesicle membrane. Functionally, probably involved in membrane trafficking. The sequence is that of Secretory carrier-associated membrane protein 3 (SCAMP3) from Oryza sativa subsp. japonica (Rice).